A 289-amino-acid chain; its full sequence is MRSAATLPYESNPSQGVQGCVRLSFVQRHGQSRLESLYHSDPMRVIIPQTPPGEPVHGVVVTTSGGLVGGDQLDIELIARPHTQLLVMTQAAEKVYRSTGADSTVQIALHVEAGAFLEWLPQETILFDQGRLRRTTQVYLGENARLLAGEMVLFGRSAHGEQLRQGLLRDSWLVHREGALVWADLLKLEGDLQHPLQHPAALAGAKGCATLLLAGEEAAQLLEPLRGWLAEAGMEGPSVKVAAGVVHGLLVVRWLGWDARLLRQGYGQMWSWLRGQLGRPARMPRLWDI.

This sequence belongs to the UreD family. UreD, UreF and UreG form a complex that acts as a GTP-hydrolysis-dependent molecular chaperone, activating the urease apoprotein by helping to assemble the nickel containing metallocenter of UreC. The UreE protein probably delivers the nickel.

It is found in the cytoplasm. Its function is as follows. Required for maturation of urease via the functional incorporation of the urease nickel metallocenter. This Magnetococcus marinus (strain ATCC BAA-1437 / JCM 17883 / MC-1) protein is Urease accessory protein UreD.